A 262-amino-acid polypeptide reads, in one-letter code: Sepiapterin reductase (262 aa).

Residue Met-1 is modified to N-acetylmethionine. 15 to 21 provides a ligand contact to NADP(+); it reads GASRGFG. At Ser-33 the chain carries Phosphoserine. 43-44 serves as a coordination point for NADP(+); the sequence is RS. Phosphoserine; by CaMK2; in vitro is present on Ser-46. An NADP(+)-binding site is contributed by 70-71; the sequence is DL. Residues 158-159 and Tyr-171 contribute to the substrate site; that span reads SL. Position 175 (Lys-175) interacts with NADP(+). A Phosphoserine; by CaMK2; in vitro modification is found at Ser-196. Substrate is bound at residue Gly-200. NADP(+) is bound at residue 202–207; it reads LDTNMQ. Ser-214 bears the Phosphoserine; by CaMK2; in vitro mark. Asp-258 contacts substrate.

Belongs to the sepiapterin reductase family. In terms of assembly, homodimer. Post-translationally, in vitro phosphorylation of Ser-46, Ser-196 and Ser-214 by CaMK2 does not change kinetic parameters.

The protein resides in the cytoplasm. The enzyme catalyses L-erythro-7,8-dihydrobiopterin + NADP(+) = L-sepiapterin + NADPH + H(+). It carries out the reaction (6R)-L-erythro-5,6,7,8-tetrahydrobiopterin + 2 NADP(+) = 6-pyruvoyl-5,6,7,8-tetrahydropterin + 2 NADPH + 2 H(+). Catalyzes the final one or two reductions in tetra-hydrobiopterin biosynthesis to form 5,6,7,8-tetrahydrobiopterin. This Rattus norvegicus (Rat) protein is Sepiapterin reductase (Spr).